The following is a 782-amino-acid chain: E3 ubiquitin-protein ligase SopA (782 aa).

The Glycyl thioester intermediate role is filled by cysteine 753.

The protein belongs to the SopA E3 ligase family. In terms of processing, ubiquitinated in the presence of host E1 ubiquitin-activating enzyme, E2 ubiquitin-conjugating enzyme and ubiquitin.

It is found in the secreted. The protein resides in the host cell. The enzyme catalyses S-ubiquitinyl-[E2 ubiquitin-conjugating enzyme]-L-cysteine + [acceptor protein]-L-lysine = [E2 ubiquitin-conjugating enzyme]-L-cysteine + N(6)-ubiquitinyl-[acceptor protein]-L-lysine.. Functionally, effector proteins function to alter host cell physiology and promote bacterial survival in host tissues. This protein is an E3 ubiquitin ligase that interferes with host's ubiquitination pathway. This Salmonella choleraesuis (strain SC-B67) protein is E3 ubiquitin-protein ligase SopA (sopA).